The chain runs to 488 residues: Monothiol glutaredoxin-S17 (488 aa).

The Thioredoxin domain maps to 2-107; it reads SGTVKDIVSK…LANKVGKVAG (106 aa). Glutaredoxin domains are found at residues 154–256, 284–386, and 391–488; these read KSRL…GITT, RARL…GITG, and EDRL…TLSE. Residue Lys-408 participates in glutathione binding. Residue Cys-416 coordinates [2Fe-2S] cluster. Glutathione contacts are provided by residues Arg-445, Phe-457, and 470-471; that span reads CD.

Belongs to the glutaredoxin family. CGFS subfamily. As to quaternary structure, [2Fe-2S]-bridged holo-homodimer. Interacts in vitro with SUFE1, BOLA1, BOLA2 and BOLA4. Interacts in vivo only with BOLA2. Interacts with RGLG3 and RGLG4. In terms of processing, ubiquitinated at Lys-154. Polyubiquitinated by RGLG3 and RGLG4. Polyubiquitination of GRXS17 leads to its degradation by the proteasome.

It localises to the cytoplasm. May only reduce GSH-thiol disulfides, but not protein disulfides. Participates probably to the maturation of iron-sulfur proteins and to the regulation of the redox state of the BOLA proteins. The GRXS17-BOLA2 heterodimer binds a labile, oxygen sensitive iron-sulfur cluster. The sequence is that of Monothiol glutaredoxin-S17 from Arabidopsis thaliana (Mouse-ear cress).